The primary structure comprises 156 residues: 6,7-dimethyl-8-ribityllumazine synthase (156 aa).

Residues Phe-22, Ala-57 to Glu-59, and Thr-81 to Ile-83 each bind 5-amino-6-(D-ribitylamino)uracil. Residue Gly-86–Thr-87 coordinates (2S)-2-hydroxy-3-oxobutyl phosphate. His-89 functions as the Proton donor in the catalytic mechanism. Phe-114 serves as a coordination point for 5-amino-6-(D-ribitylamino)uracil. Arg-128 provides a ligand contact to (2S)-2-hydroxy-3-oxobutyl phosphate.

This sequence belongs to the DMRL synthase family. Forms an icosahedral capsid composed of 60 subunits, arranged as a dodecamer of pentamers.

The enzyme catalyses (2S)-2-hydroxy-3-oxobutyl phosphate + 5-amino-6-(D-ribitylamino)uracil = 6,7-dimethyl-8-(1-D-ribityl)lumazine + phosphate + 2 H2O + H(+). It participates in cofactor biosynthesis; riboflavin biosynthesis; riboflavin from 2-hydroxy-3-oxobutyl phosphate and 5-amino-6-(D-ribitylamino)uracil: step 1/2. Its function is as follows. Catalyzes the formation of 6,7-dimethyl-8-ribityllumazine by condensation of 5-amino-6-(D-ribitylamino)uracil with 3,4-dihydroxy-2-butanone 4-phosphate. This is the penultimate step in the biosynthesis of riboflavin. The sequence is that of 6,7-dimethyl-8-ribityllumazine synthase from Citrobacter koseri (strain ATCC BAA-895 / CDC 4225-83 / SGSC4696).